A 527-amino-acid chain; its full sequence is Catalase (527 aa).

Basic and acidic residues predominate over residues 1 to 22 (MADSRDPASDQMKLWKEQRAAQ). The segment at 1 to 34 (MADSRDPASDQMKLWKEQRAAQKPDVLTTGGGNP) is disordered. Position 2 is an N-acetylalanine (Ala2). Residue Ser9 is modified to Phosphoserine. An N6-succinyllysine modification is found at Lys13. Residues His75 and Asn148 contribute to the active site. NADP(+) is bound by residues His194, Ser201, Arg203, and Asn213. Lys221 carries the N6-succinyllysine modification. Position 233 is an N6-acetyllysine (Lys233). Positions 237, 303, and 305 each coordinate NADP(+). Tyr358 provides a ligand contact to heme. Ser422 and Ser434 each carry phosphoserine. N6-acetyllysine; alternate occurs at positions 449 and 480. Lys449 and Lys480 each carry N6-succinyllysine; alternate. N6-acetyllysine is present on Lys499. Phosphothreonine is present on Thr511. The residue at position 517 (Ser517) is a Phosphoserine. Residues 524-527 (KANL) carry the Microbody targeting signal; atypical motif.

The protein belongs to the catalase family. In terms of assembly, homotetramer. Interacts (via microbody targeting signal) with PEX5, monomeric form interacts with PEX5, leading to its translocation into peroxisomes. Heme serves as cofactor. Requires NADP(+) as cofactor.

It is found in the peroxisome matrix. The catalysed reaction is 2 H2O2 = O2 + 2 H2O. Its function is as follows. Catalyzes the degradation of hydrogen peroxide (H(2)O(2)) generated by peroxisomal oxidases to water and oxygen, thereby protecting cells from the toxic effects of hydrogen peroxide. Promotes growth of cells including T-cells, B-cells, myeloid leukemia cells, melanoma cells, mastocytoma cells and normal and transformed fibroblast cells. The sequence is that of Catalase (CAT) from Canis lupus familiaris (Dog).